Consider the following 341-residue polypeptide: S-adenosylmethionine:tRNA ribosyltransferase-isomerase (341 aa).

Belongs to the QueA family. As to quaternary structure, monomer.

The protein localises to the cytoplasm. It catalyses the reaction 7-aminomethyl-7-carbaguanosine(34) in tRNA + S-adenosyl-L-methionine = epoxyqueuosine(34) in tRNA + adenine + L-methionine + 2 H(+). Its pathway is tRNA modification; tRNA-queuosine biosynthesis. Functionally, transfers and isomerizes the ribose moiety from AdoMet to the 7-aminomethyl group of 7-deazaguanine (preQ1-tRNA) to give epoxyqueuosine (oQ-tRNA). The sequence is that of S-adenosylmethionine:tRNA ribosyltransferase-isomerase from Clostridium perfringens (strain SM101 / Type A).